We begin with the raw amino-acid sequence, 208 residues long: MTNKDESVEKNTESTVEETNVKQNIDDSVEQAEESKGHLQDEAIEETSDENVIEEIDPKDQKINELQQLADENEEKYLRLYAEFENYKRRIQKENEINKTYQAQRVLTDILPAIDNIERALQIEGDDETFKSLQKGVQMVHESLINALKDNGLEVIKTEGEAFDPNIHQAVVQDDNPDFESGEITQELQKGYKLKDRVLRPSMVKVNQ.

A compositionally biased stretch (basic and acidic residues) spans 1–12; sequence MTNKDESVEKNT. Residues 1 to 51 form a disordered region; sequence MTNKDESVEKNTESTVEETNVKQNIDDSVEQAEESKGHLQDEAIEETSDEN. A compositionally biased stretch (polar residues) spans 13-23; sequence ESTVEETNVKQ. The span at 42–51 shows a compositional bias: acidic residues; sequence EAIEETSDEN.

This sequence belongs to the GrpE family. Homodimer.

It localises to the cytoplasm. Participates actively in the response to hyperosmotic and heat shock by preventing the aggregation of stress-denatured proteins, in association with DnaK and GrpE. It is the nucleotide exchange factor for DnaK and may function as a thermosensor. Unfolded proteins bind initially to DnaJ; upon interaction with the DnaJ-bound protein, DnaK hydrolyzes its bound ATP, resulting in the formation of a stable complex. GrpE releases ADP from DnaK; ATP binding to DnaK triggers the release of the substrate protein, thus completing the reaction cycle. Several rounds of ATP-dependent interactions between DnaJ, DnaK and GrpE are required for fully efficient folding. The polypeptide is Protein GrpE (Staphylococcus aureus (strain USA300)).